Consider the following 440-residue polypeptide: tRNA(Ile)-lysidine synthase (440 aa).

Serine 13–serine 18 serves as a coordination point for ATP.

This sequence belongs to the tRNA(Ile)-lysidine synthase family.

It localises to the cytoplasm. It carries out the reaction cytidine(34) in tRNA(Ile2) + L-lysine + ATP = lysidine(34) in tRNA(Ile2) + AMP + diphosphate + H(+). In terms of biological role, ligates lysine onto the cytidine present at position 34 of the AUA codon-specific tRNA(Ile) that contains the anticodon CAU, in an ATP-dependent manner. Cytidine is converted to lysidine, thus changing the amino acid specificity of the tRNA from methionine to isoleucine. This chain is tRNA(Ile)-lysidine synthase, found in Solibacter usitatus (strain Ellin6076).